Consider the following 511-residue polypeptide: MQTPPTPLSSLTPHKLRLRRLGIDTYQEPVLYMHRDCRVCHSEGFEAQSRVELALGDRTIVATLNVVSGDFLAPDEAGLSEAAWRLLGAQEGDMVSPRHPAPIESLGHVRAKVYGRHLTQAAITAVIEDVTAGRYSDLQLAAFVTACAGDRLDQEETVSLTRAMVAAGERIDWGEGLVMDKHCVGGLPGNRTTMVIVPIVAACGLRMPKTSSRAITSPAGTADTMETLAPVDLDVAQIRRVVERTGGCVVWGGAVRLSPADDILIRVERPLDLDSQGQLVASILSKKVAAGSTHVLIDMPVGPTAKVRSAEAADLLGRLLGQVGQTLGLRMRVVQTDGLAPVGRGIGPALEARDVLAVLRNLATAPADLAQRSLLLAGEVLEFGGAAPAGGGLALASAVLADGRAWRKFQDICAAQGGLREPPVAAHQQAVHALRSGSVLAIDNRRLARIAKLAGAPGAACAGIDLHVRPGEFVERGQPLFTLHAATPGELAYALEYAASQAETVHVLEDA.

The protein belongs to the thymidine/pyrimidine-nucleoside phosphorylase family. Type 2 subfamily.

The enzyme catalyses thymidine + phosphate = 2-deoxy-alpha-D-ribose 1-phosphate + thymine. The polypeptide is Putative thymidine phosphorylase (Polaromonas sp. (strain JS666 / ATCC BAA-500)).